Here is a 376-residue protein sequence, read N- to C-terminus: 28S rRNA (uridine-N(3))-methyltransferase (376 aa).

Disordered stretches follow at residues 1 to 33 and 49 to 71; these read MAERGRKRPCGPGEHGQRIEWRKWKQQKKEEKK and AQEEQAKRLEEEEAAAEKEDRGR. Over residues 15-33 the composition is skewed to basic and acidic residues; the sequence is HGQRIEWRKWKQQKKEEKK. Positions 289, 292, 312, 341, and 342 each coordinate S-adenosyl-L-homocysteine. S-adenosyl-L-methionine is bound by residues Arg292, Gly312, Asn341, and Thr342.

The protein belongs to the class IV-like SAM-binding methyltransferase superfamily. As to quaternary structure, interacts with INCA1.

The protein resides in the cytoplasm. It is found in the cytoskeleton. Its subcellular location is the spindle. The protein localises to the chromosome. It localises to the centromere. The protein resides in the kinetochore. It is found in the microtubule organizing center. Its subcellular location is the centrosome. The enzyme catalyses uridine in 28S rRNA + S-adenosyl-L-methionine = N(3)-methyluridine in 28S rRNA + S-adenosyl-L-homocysteine + H(+). Its function is as follows. S-adenosyl-L-methionine-dependent methyltransferase that specifically methylates the N3 position of a uridine in 28S rRNA. Required for association of the centrosomes with the poles of the bipolar mitotic spindle during metaphase. Also involved in chromosome alignment. May promote centrosome maturation probably by recruiting A-kinase anchor protein AKAP9 to centrosomes in early mitosis. Binds specifically to miRNA MIR145 hairpin, regulates MIR145 expression at a postranscriptional level. This is 28S rRNA (uridine-N(3))-methyltransferase from Homo sapiens (Human).